A 366-amino-acid chain; its full sequence is Ribosomal RNA large subunit methyltransferase M (366 aa).

Residues Ser-188, 221–224, Asp-240, Asp-260, and Asp-277 each bind S-adenosyl-L-methionine; that span reads CPGG. Residue Lys-306 is the Proton acceptor of the active site.

This sequence belongs to the class I-like SAM-binding methyltransferase superfamily. RNA methyltransferase RlmE family. RlmM subfamily. As to quaternary structure, monomer.

It localises to the cytoplasm. The enzyme catalyses cytidine(2498) in 23S rRNA + S-adenosyl-L-methionine = 2'-O-methylcytidine(2498) in 23S rRNA + S-adenosyl-L-homocysteine + H(+). Catalyzes the 2'-O-methylation at nucleotide C2498 in 23S rRNA. The chain is Ribosomal RNA large subunit methyltransferase M from Cronobacter sakazakii (strain ATCC BAA-894) (Enterobacter sakazakii).